Reading from the N-terminus, the 126-residue chain is MHLSQLIACALLLALLSLRPSEAKPGTPPKVPRTPPGEELADSQAAGGNQKKGDKTPGSGGANLKGDRSRLLRDLRVDTKSRAAWARLLHEHPNARKYKGGNKKGLSKGCFGLKLDRIGSMSGLGC.

The signal sequence occupies residues 1-23 (MHLSQLIACALLLALLSLRPSEA). The tract at residues 20–73 (PSEAKPGTPPKVPRTPPGEELADSQAAGGNQKKGDKTPGSGGANLKGDRSRLLR) is disordered. The propeptide occupies 24 to 73 (KPGTPPKVPRTPPGEELADSQAAGGNQKKGDKTPGSGGANLKGDRSRLLR). The span at 26–35 (GTPPKVPRTP) shows a compositional bias: pro residues. Cys-110 and Cys-126 are joined by a disulfide.

This sequence belongs to the natriuretic peptide family. Post-translationally, degraded by IDE (in vitro).

The protein resides in the secreted. Functionally, hormone which plays a role in endochondral ossification through regulation of cartilaginous growth plate chondrocytes proliferation and differentiation. May also be vasoactive and natriuretic. Acts by specifically binding and stimulating NPR2 to produce cGMP. Binds the clearance receptor NPR3. This is C-type natriuretic peptide (Nppc) from Mus musculus (Mouse).